A 235-amino-acid polypeptide reads, in one-letter code: MEKKMLYEGKAKKVYEAEDKDHVIIYYKDDATAFNGAKKSQIDHKGILNNNITSAIFEMLHEKGIETHFEKKLNEREQLCKKVEIVPLEVIVRNVAAGSMAKRLGVSEGKELNTTIFEICYKNDELGDPLINDYHAVALGLATFDELKEIYNITSNVNNILKEFFLKQNIKLIDFKLEFGRFNGKIILADEISPDTCRFWDATTNEKLDKDRFRRDMGNVEEAYIEILNRISNAK.

It belongs to the SAICAR synthetase family.

The enzyme catalyses 5-amino-1-(5-phospho-D-ribosyl)imidazole-4-carboxylate + L-aspartate + ATP = (2S)-2-[5-amino-1-(5-phospho-beta-D-ribosyl)imidazole-4-carboxamido]succinate + ADP + phosphate + 2 H(+). The protein operates within purine metabolism; IMP biosynthesis via de novo pathway; 5-amino-1-(5-phospho-D-ribosyl)imidazole-4-carboxamide from 5-amino-1-(5-phospho-D-ribosyl)imidazole-4-carboxylate: step 1/2. The polypeptide is Phosphoribosylaminoimidazole-succinocarboxamide synthase (Clostridium novyi (strain NT)).